A 707-amino-acid polypeptide reads, in one-letter code: MDSCHKIDYGLYALEILAQYHNVSVNPEEIKHRFDTDGTGLGLTSWLLAAKSLELKVKQVKKTIDRLNFISLPALVWREDGCHFILTKVSKEANRYLIFDLEQRNPRVLEQSEFEALYQGHIILIASRSSVTGKLAKFDFTWFIPAIIKYRKIFIETLVVSVFLQLFALITPLFFQVVMDKVLVHRGFSTLNVITVALSVVVVFEIILSGLRTYIFAHSTSRIDVELGAKLFRHLLALPISYFESRRVGDTVARVRELDQIRNFLTGQALTSVLDLLFSFIFFAVMWYYSPKLTLVILFSLPCYAAWSVFISPILRRRLDDKFSRNADNQSFLVESVTAINTIKAMAVSPQMTNIWDKQLAGYVAAGFKVTVLATIGQQGIQLIQKTVMIINLWLGAHLVISGDLSIGQLIAFNMLAGQIVAPVIRLAQIWQDFQQVGISVTRLGDVLNSPTESYHGKLALPEINGDITFRNIRFRYKPDSPVILDNINLSIKQGEVIGIVGRSGSGKSTLTKLIQRFYIPENGQVLIDGHDLALADPNWLRRQVGVVLQDNVLLNRSIIDNISLANPGMSVEKVIYAAKLAGAHDFISELREGYNTIVGEQGAGLSGGQRQRIAIARALVNNPKILIFDEATSALDYESEHVIMRNMHKICKGRTVIIIAHRLSTVKNADRIIVMEKGKIVEQGKHKELLSEPESLYSYLYQLQSD.

One can recognise a Peptidase C39 domain in the interval 3–125 (SCHKIDYGLY…ALYQGHIILI (123 aa)). Residue histidine 83 is part of the active site. Residues 154–436 (FIETLVVSVF…LAQIWQDFQQ (283 aa)) enclose the ABC transmembrane type-1 domain. The next 5 membrane-spanning stretches (helical) occupy residues 158–178 (LVVS…FQVV), 191–211 (LNVI…LSGL), 269–289 (ALTS…MWYY), 295–315 (LVIL…SPIL), and 388–408 (VMII…LSIG). Positions 468 to 703 (ITFRNIRFRY…PESLYSYLYQ (236 aa)) constitute an ABC transporter domain. 502–509 (GRSGSGKS) is an ATP binding site.

Belongs to the ABC transporter superfamily. Protein-1 exporter (TC 3.A.1.109) family. In terms of assembly, homodimer.

Its subcellular location is the cell inner membrane. Its function is as follows. Part of the ABC transporter complex HlyBD involved in hemolysin export. Transmembrane domains (TMD) form a pore in the inner membrane and the ATP-binding domain (NBD) is responsible for energy generation. This is Alpha-hemolysin translocation ATP-binding protein HlyB (hlyB) from Escherichia coli.